The chain runs to 383 residues: Succinyl-diaminopimelate desuccinylase (383 aa).

H74 is a binding site for Zn(2+). The active site involves D76. Zn(2+) is bound at residue D107. Residue E141 is the Proton acceptor of the active site. 3 residues coordinate Zn(2+): E142, E170, and H356.

It belongs to the peptidase M20A family. DapE subfamily. As to quaternary structure, homodimer. The cofactor is Zn(2+). Co(2+) serves as cofactor.

It carries out the reaction N-succinyl-(2S,6S)-2,6-diaminopimelate + H2O = (2S,6S)-2,6-diaminopimelate + succinate. The protein operates within amino-acid biosynthesis; L-lysine biosynthesis via DAP pathway; LL-2,6-diaminopimelate from (S)-tetrahydrodipicolinate (succinylase route): step 3/3. Its function is as follows. Catalyzes the hydrolysis of N-succinyl-L,L-diaminopimelic acid (SDAP), forming succinate and LL-2,6-diaminopimelate (DAP), an intermediate involved in the bacterial biosynthesis of lysine and meso-diaminopimelic acid, an essential component of bacterial cell walls. This Cupriavidus necator (strain ATCC 17699 / DSM 428 / KCTC 22496 / NCIMB 10442 / H16 / Stanier 337) (Ralstonia eutropha) protein is Succinyl-diaminopimelate desuccinylase.